The following is a 331-amino-acid chain: 2-keto-3-deoxygluconate permease (331 aa).

10 helical membrane passes run 10 to 30 (IPGG…TLAP), 42 to 62 (GMIS…GASI), 77 to 97 (LVLT…MFIP), 100 to 120 (GIQT…AMDM), 141 to 161 (AFVL…LGSA), 163 to 183 (LASF…IGFA), 200 to 220 (PVLI…NVIM), 224 to 244 (LLGI…LIIA), 254 to 274 (TAGV…MIIA), and 289 to 309 (ALVA…TALY).

It belongs to the KdgT transporter family.

It localises to the cell inner membrane. The enzyme catalyses 2-dehydro-3-deoxy-D-gluconate(in) + H(+)(in) = 2-dehydro-3-deoxy-D-gluconate(out) + H(+)(out). Its function is as follows. Catalyzes the proton-dependent uptake of 2-keto-3-deoxygluconate (KDG) into the cell. This chain is 2-keto-3-deoxygluconate permease, found in Enterobacter sp. (strain 638).